The sequence spans 238 residues: Large ribosomal subunit protein uL1 (238 aa).

It belongs to the universal ribosomal protein uL1 family. In terms of assembly, part of the 50S ribosomal subunit.

Binds directly to 23S rRNA. The L1 stalk is quite mobile in the ribosome, and is involved in E site tRNA release. Functionally, protein L1 is also a translational repressor protein, it controls the translation of the L11 operon by binding to its mRNA. In Frankia alni (strain DSM 45986 / CECT 9034 / ACN14a), this protein is Large ribosomal subunit protein uL1.